The chain runs to 336 residues: GTP 3',8-cyclase (336 aa).

In terms of domain architecture, Radical SAM core spans Ala-16–Ala-241. Arg-25 is a binding site for GTP. 2 residues coordinate [4Fe-4S] cluster: Cys-32 and Cys-36. Residue Tyr-38 participates in S-adenosyl-L-methionine binding. [4Fe-4S] cluster is bound at residue Cys-39. Arg-75 lines the GTP pocket. Residue Gly-79 participates in S-adenosyl-L-methionine binding. GTP is bound at residue Thr-106. Ser-130 serves as a coordination point for S-adenosyl-L-methionine. A GTP-binding site is contributed by Lys-167. Met-201 is an S-adenosyl-L-methionine binding site. [4Fe-4S] cluster contacts are provided by Cys-264 and Cys-267. Arg-269–Arg-271 provides a ligand contact to GTP. Residue Cys-281 coordinates [4Fe-4S] cluster.

It belongs to the radical SAM superfamily. MoaA family. As to quaternary structure, monomer and homodimer. The cofactor is [4Fe-4S] cluster.

The catalysed reaction is GTP + AH2 + S-adenosyl-L-methionine = (8S)-3',8-cyclo-7,8-dihydroguanosine 5'-triphosphate + 5'-deoxyadenosine + L-methionine + A + H(+). Its pathway is cofactor biosynthesis; molybdopterin biosynthesis. Functionally, catalyzes the cyclization of GTP to (8S)-3',8-cyclo-7,8-dihydroguanosine 5'-triphosphate. The protein is GTP 3',8-cyclase of Actinobacillus succinogenes (strain ATCC 55618 / DSM 22257 / CCUG 43843 / 130Z).